A 57-amino-acid polypeptide reads, in one-letter code: Mambaquaretin-3 (57 aa).

A BPTI/Kunitz inhibitor domain is found at 5 to 55; it reads CNLPVKPGPCNGFFSAFYYSQKKNKCHSFTYGGCKGNANRFSTIEECRRTC. Disulfide bonds link Cys5–Cys55, Cys14–Cys38, and Cys30–Cys51.

It belongs to the venom Kunitz-type family. As to expression, expressed by the venom gland.

The protein localises to the secreted. In terms of biological role, interacts with vasopressin V2 receptor (V2R/AVPR2), probably in a selective manner. Inhibits vasopressin binding human V2R in the nanomolar range (Ki=13.3 nM), and also moderately inhibits vasopressin-induced cAMP production (IC(50)=453 nM). In vivo, intraperitoneal injection of this protein into rats increases diuresis by 4.5-fold, without any loss of electrolytes. In Dendroaspis polylepis polylepis (Black mamba), this protein is Mambaquaretin-3.